The following is a 126-amino-acid chain: Large ribosomal subunit protein uL22 (126 aa).

Belongs to the universal ribosomal protein uL22 family. Part of the 50S ribosomal subunit.

Its function is as follows. This protein binds specifically to 23S rRNA; its binding is stimulated by other ribosomal proteins, e.g. L4, L17, and L20. It is important during the early stages of 50S assembly. It makes multiple contacts with different domains of the 23S rRNA in the assembled 50S subunit and ribosome. Functionally, the globular domain of the protein is located near the polypeptide exit tunnel on the outside of the subunit, while an extended beta-hairpin is found that lines the wall of the exit tunnel in the center of the 70S ribosome. This is Large ribosomal subunit protein uL22 from Dinoroseobacter shibae (strain DSM 16493 / NCIMB 14021 / DFL 12).